A 921-amino-acid chain; its full sequence is Isoleucine--tRNA ligase (921 aa).

A 'HIGH' region motif is present at residues 57–67 (PYANGELHMGH). L-isoleucyl-5'-AMP is bound at residue E552. The 'KMSKS' region motif lies at 593 to 597 (KMSKS). K596 provides a ligand contact to ATP. Residues C888, C891, C908, and C911 each coordinate Zn(2+).

It belongs to the class-I aminoacyl-tRNA synthetase family. IleS type 1 subfamily. As to quaternary structure, monomer. Requires Zn(2+) as cofactor.

The protein resides in the cytoplasm. It carries out the reaction tRNA(Ile) + L-isoleucine + ATP = L-isoleucyl-tRNA(Ile) + AMP + diphosphate. In terms of biological role, catalyzes the attachment of isoleucine to tRNA(Ile). As IleRS can inadvertently accommodate and process structurally similar amino acids such as valine, to avoid such errors it has two additional distinct tRNA(Ile)-dependent editing activities. One activity is designated as 'pretransfer' editing and involves the hydrolysis of activated Val-AMP. The other activity is designated 'posttransfer' editing and involves deacylation of mischarged Val-tRNA(Ile). The polypeptide is Isoleucine--tRNA ligase (Listeria innocua serovar 6a (strain ATCC BAA-680 / CLIP 11262)).